The following is a 102-amino-acid chain: Integration host factor subunit alpha (102 aa).

The disordered stretch occupies residues 49–70 (FGNFQLRTKPQRPGRNPKTGEE).

The protein belongs to the bacterial histone-like protein family. As to quaternary structure, heterodimer of an alpha and a beta chain.

This protein is one of the two subunits of integration host factor, a specific DNA-binding protein that functions in genetic recombination as well as in transcriptional and translational control. In Nitrosomonas europaea (strain ATCC 19718 / CIP 103999 / KCTC 2705 / NBRC 14298), this protein is Integration host factor subunit alpha.